Reading from the N-terminus, the 267-residue chain is Mannose-specific lectin 1 (267 aa).

A signal peptide spans 1–24; the sequence is MAKSLVLSSLLLALLLAAPLASLA. Bulb-type lectin domains lie at 26–136 and 150–260; these read NNVL…APNR and RNVL…SPAR. 2 disulfide bridges follow: Cys-54–Cys-76 and Cys-178–Cys-203.

Heterotetramer of 2 domain 1 and 2 domain 2 chains arranged as a dimer of domain 1/domain 2 heterodimers.

In terms of biological role, mannose-specific lectin. Has weak agglutinating activity towards trypsin-treated erythrocytes from rabbit but not from human. The protein is Mannose-specific lectin 1 of Crocus vernus (Dutch crocus).